A 410-amino-acid polypeptide reads, in one-letter code: Peptidase T (410 aa).

Residue histidine 78 participates in Zn(2+) binding. Aspartate 80 is a catalytic residue. Residue aspartate 140 coordinates Zn(2+). Glutamate 174 functions as the Proton acceptor in the catalytic mechanism. Residues glutamate 175, aspartate 197, and histidine 379 each coordinate Zn(2+).

The protein belongs to the peptidase M20B family. Zn(2+) serves as cofactor.

It localises to the cytoplasm. The enzyme catalyses Release of the N-terminal residue from a tripeptide.. Functionally, cleaves the N-terminal amino acid of tripeptides. In Vibrio cholerae serotype O1 (strain ATCC 39315 / El Tor Inaba N16961), this protein is Peptidase T.